We begin with the raw amino-acid sequence, 700 residues long: Transketolase (700 aa).

His-45 contacts substrate. Thiamine diphosphate contacts are provided by residues Thr-48, His-85, and Gly-133–Leu-135. Asp-177 lines the Mg(2+) pocket. 2 residues coordinate thiamine diphosphate: Gly-178 and Asn-207. Mg(2+) contacts are provided by Asn-207 and Ile-209. 3 residues coordinate substrate: His-283, Arg-378, and Ser-405. His-283 is a binding site for thiamine diphosphate. The active-site Proton donor is Glu-441. Phe-467 provides a ligand contact to thiamine diphosphate. Substrate-binding residues include His-491, Asp-499, and Arg-552.

Belongs to the transketolase family. As to quaternary structure, homodimer. It depends on Mg(2+) as a cofactor. Ca(2+) serves as cofactor. Mn(2+) is required as a cofactor. The cofactor is Co(2+). Requires thiamine diphosphate as cofactor.

It carries out the reaction D-sedoheptulose 7-phosphate + D-glyceraldehyde 3-phosphate = aldehydo-D-ribose 5-phosphate + D-xylulose 5-phosphate. Functionally, catalyzes the transfer of a two-carbon ketol group from a ketose donor to an aldose acceptor, via a covalent intermediate with the cofactor thiamine pyrophosphate. The polypeptide is Transketolase (tkt) (Mycobacterium bovis (strain ATCC BAA-935 / AF2122/97)).